Reading from the N-terminus, the 206-residue chain is MARRKNHSIKIENNEKENQILVSLSIVALLGGCSEEQVQRDVYQSLDDCLADWKKIELCEADKNTESTQKTATTQQQGLGLNIRDNGNAESAVKNPAENNAQANQSENRAESTTKAESTDPSLGAAIAGGVIGYMAARAISSFLGPSYHPGNRAVTTPTGQVVQPQTNRSVGKPMLVKGNAGSMNSKPVSRGGFSSPNKTHRSSGG.

Disordered stretches follow at residues 64 to 123 (NTES…DPSL) and 155 to 206 (VTTP…SSGG). A compositionally biased stretch (polar residues) spans 66–79 (ESTQKTATTQQQGL). Over residues 97 to 107 (AENNAQANQSE) the composition is skewed to low complexity. A compositionally biased stretch (basic and acidic residues) spans 108–118 (NRAESTTKAES). Positions 155–167 (VTTPTGQVVQPQT) are enriched in low complexity. Positions 182 to 198 (GSMNSKPVSRGGFSSPN) are enriched in polar residues.

This is an uncharacterized protein from Haemophilus influenzae (strain ATCC 51907 / DSM 11121 / KW20 / Rd).